Consider the following 262-residue polypeptide: Acyl-[acyl-carrier-protein]--UDP-N-acetylglucosamine O-acyltransferase (262 aa).

The protein belongs to the transferase hexapeptide repeat family. LpxA subfamily. Homotrimer.

It is found in the cytoplasm. It catalyses the reaction a (3R)-hydroxyacyl-[ACP] + UDP-N-acetyl-alpha-D-glucosamine = a UDP-3-O-[(3R)-3-hydroxyacyl]-N-acetyl-alpha-D-glucosamine + holo-[ACP]. The protein operates within glycolipid biosynthesis; lipid IV(A) biosynthesis; lipid IV(A) from (3R)-3-hydroxytetradecanoyl-[acyl-carrier-protein] and UDP-N-acetyl-alpha-D-glucosamine: step 1/6. Involved in the biosynthesis of lipid A, a phosphorylated glycolipid that anchors the lipopolysaccharide to the outer membrane of the cell. The polypeptide is Acyl-[acyl-carrier-protein]--UDP-N-acetylglucosamine O-acyltransferase (Cronobacter sakazakii (strain ATCC BAA-894) (Enterobacter sakazakii)).